A 469-amino-acid polypeptide reads, in one-letter code: Sorting and assembly machinery component 50 homolog (469 aa).

A disordered region spans residues 1-20 (MGTVHARSLEPLPSSGPDFG). In terms of domain architecture, POTRA spans 45 to 125 (VVVQHVHFDG…LDVTFEVTEL (81 aa)). The residue at position 255 (Lys-255) is an N6-methyllysine.

The protein belongs to the SAM50/omp85 family. As to quaternary structure, associates with the mitochondrial contact site and cristae organizing system (MICOS) complex, composed of at least MICOS10/MIC10, CHCHD3/MIC19, CHCHD6/MIC25, APOOL/MIC27, IMMT/MIC60, APOO/MIC23/MIC26 and QIL1/MIC13. This complex was also known under the names MINOS or MitOS complex. The MICOS complex associates with mitochondrial outer membrane proteins SAMM50, MTX1 and MTX2 (together described as components of the mitochondrial outer membrane sorting assembly machinery (SAM) complex) and DNAJC11, mitochondrial inner membrane protein TMEM11 and with HSPA9. The MICOS and SAM complexes together with DNAJC11 are part of a large protein complex spanning both membranes termed the mitochondrial intermembrane space bridging (MIB) complex. Interacts with CHCHD3/MIC19. Interacts with ARMC1. (Microbial infection) Interacts with parasite T.gondii RH strain MAF1b1; the interaction is probably indirect and results in the disruption of the MIB complex and the formation of SPOTs (structures positive for outer mitochondrial membrane (OMM)), a cellular response to OMM stress, which leads to the constitutive shedding of OMM vesicles.

It localises to the mitochondrion outer membrane. The protein resides in the cytoplasm. The protein localises to the mitochondrion. Its function is as follows. Plays a crucial role in the maintenance of the structure of mitochondrial cristae and the proper assembly of the mitochondrial respiratory chain complexes. Required for the assembly of TOMM40 into the TOM complex. In Homo sapiens (Human), this protein is Sorting and assembly machinery component 50 homolog (SAMM50).